A 517-amino-acid chain; its full sequence is ATP synthase subunit alpha 1 (517 aa).

G174 to T181 contributes to the ATP binding site.

Belongs to the ATPase alpha/beta chains family. F-type ATPases have 2 components, CF(1) - the catalytic core - and CF(0) - the membrane proton channel. CF(1) has five subunits: alpha(3), beta(3), gamma(1), delta(1), epsilon(1). CF(0) has three main subunits: a(1), b(2) and c(9-12). The alpha and beta chains form an alternating ring which encloses part of the gamma chain. CF(1) is attached to CF(0) by a central stalk formed by the gamma and epsilon chains, while a peripheral stalk is formed by the delta and b chains.

The protein resides in the cell inner membrane. It carries out the reaction ATP + H2O + 4 H(+)(in) = ADP + phosphate + 5 H(+)(out). In terms of biological role, produces ATP from ADP in the presence of a proton gradient across the membrane. The alpha chain is a regulatory subunit. This is ATP synthase subunit alpha 1 from Polaromonas naphthalenivorans (strain CJ2).